Consider the following 207-residue polypeptide: HTH-type transcriptional regulator AqdR (207 aa).

An HTH tetR-type domain is found at 16 to 76; the sequence is ARFRERVLDA…DALLTRTQAE (61 aa). Residues 39–58 constitute a DNA-binding region (H-T-H motif); sequence GFADVARKAGVNGVSLYRRW.

Its function is as follows. May regulate the expression of genes involved in the degradation of the Pseudomonas aeruginosa quorum sensing signal molecules HHQ (2-heptyl-4-quinolone) and PQS (2-heptyl-3-hydroxy-4-quinolone). This is HTH-type transcriptional regulator AqdR from Rhodococcus erythropolis (Arthrobacter picolinophilus).